Here is a 284-residue protein sequence, read N- to C-terminus: MDAIKKKMQAMKLEKDNAMDRADTLEQQNKEANIRAEKTEEEIRITHKKMQQVENELDQVQEQLSLANTKLEEKEKALQNAEGEVAALNRRIQLLEEDLERSEERLNTATTKLAEASQAADESERMRKVLENRSLSDEERMDALENQLKEARFLAEEADRKYDEVARKLAMVEADLERAEERAETGESKIVELEEELRVVGNNLKSLEVSEEKANQREEAYKEQIKTLANKLKAAEARAEFAERSVQKLQKEVDRLEDELVNEKEKYKSITDELDQTFSELSGY.

Residues 1 to 39 (MDAIKKKMQAMKLEKDNAMDRADTLEQQNKEANIRAEKT) are disordered. Positions 1–284 (MDAIKKKMQA…DQTFSELSGY (284 aa)) form a coiled coil. Positions 12–39 (KLEKDNAMDRADTLEQQNKEANIRAEKT) are enriched in basic and acidic residues.

The protein belongs to the tropomyosin family. As to quaternary structure, homodimer.

Its function is as follows. Tropomyosin, in association with the troponin complex, plays a central role in the calcium dependent regulation of muscle contraction. This is Tropomyosin (TM1) from Homarus americanus (American lobster).